We begin with the raw amino-acid sequence, 41 residues long: MKVVKSLKSAKSRHPDCQIVKRRGRLYVICKTNPRFKAVQK.

The protein belongs to the bacterial ribosomal protein bL36 family.

The sequence is that of Large ribosomal subunit protein bL36B from Vibrio campbellii (strain ATCC BAA-1116).